Reading from the N-terminus, the 546-residue chain is CTP synthase (546 aa).

The segment at 1-266 is amidoligase domain; the sequence is MTKYIFVTGG…GDYLVERLGL (266 aa). Ser-13 contacts CTP. A UTP-binding site is contributed by Ser-13. Position 14-19 (14-19) interacts with ATP; the sequence is SVGKGI. Tyr-54 contacts L-glutamine. Asp-71 is an ATP binding site. Positions 71 and 141 each coordinate Mg(2+). Residues 148–150, 187–192, and Lys-223 each bind CTP; these read DIE and KTKPTQ. UTP-binding positions include 187–192 and Lys-223; that span reads KTKPTQ. Residues 291-533 enclose the Glutamine amidotransferase type-1 domain; it reads PIALVGKYVE…VAAAAQTLLA (243 aa). Gly-353 provides a ligand contact to L-glutamine. Residue Cys-380 is the Nucleophile; for glutamine hydrolysis of the active site. Residues 381 to 384, Glu-404, and Arg-461 each bind L-glutamine; that span reads LGMQ. Catalysis depends on residues His-506 and Glu-508.

Belongs to the CTP synthase family. Homotetramer.

It catalyses the reaction UTP + L-glutamine + ATP + H2O = CTP + L-glutamate + ADP + phosphate + 2 H(+). The enzyme catalyses L-glutamine + H2O = L-glutamate + NH4(+). The catalysed reaction is UTP + NH4(+) + ATP = CTP + ADP + phosphate + 2 H(+). It participates in pyrimidine metabolism; CTP biosynthesis via de novo pathway; CTP from UDP: step 2/2. Its activity is regulated as follows. Allosterically activated by GTP, when glutamine is the substrate; GTP has no effect on the reaction when ammonia is the substrate. The allosteric effector GTP functions by stabilizing the protein conformation that binds the tetrahedral intermediate(s) formed during glutamine hydrolysis. Inhibited by the product CTP, via allosteric rather than competitive inhibition. Catalyzes the ATP-dependent amination of UTP to CTP with either L-glutamine or ammonia as the source of nitrogen. Regulates intracellular CTP levels through interactions with the four ribonucleotide triphosphates. The chain is CTP synthase from Chloroflexus aurantiacus (strain ATCC 29366 / DSM 635 / J-10-fl).